A 140-amino-acid chain; its full sequence is FLYWCH family member 2 (140 aa).

Disordered stretches follow at residues 1–39 (MPLP…PRKF) and 84–140 (HPEA…GKSL). Phosphoserine is present on S21. Basic and acidic residues predominate over residues 98-114 (PEQKRSRQDPGTDRTED). The segment covering 118-127 (AAGPPEAAGE) has biased composition (low complexity).

The chain is FLYWCH family member 2 (FLYWCH2) from Homo sapiens (Human).